Consider the following 195-residue polypeptide: MYRPKDHGWVEVIVGPMYSGKSEELIRRIRRAKIAKQKIQVFKPEIDNRYSKEDVVSHMGEKEQAVAIKNSREILKYFEEDTEVIAIDEVQFFDDEIVEIVNKIAESGRRVICAGLDMDFRGKPFGPIPELMAIAEFVDKIQAICVVCGNPATRTQRLINGKPAFYDDPVVLIGAMESYEARCRKCHVVPQKKEV.

ATP-binding positions include 15 to 22 (GPMYSGKS), Glu-23, 57 to 58 (SH), and 88 to 91 (DEVQ). Catalysis depends on Glu-89, which acts as the Proton acceptor. Phe-120 serves as a coordination point for substrate. Zn(2+)-binding residues include Cys-145 and Cys-148. Tyr-179 contacts substrate. Residues Cys-183 and Cys-186 each coordinate Zn(2+).

This sequence belongs to the thymidine kinase family.

The protein localises to the cytoplasm. It carries out the reaction thymidine + ATP = dTMP + ADP + H(+). This chain is Thymidine kinase, found in Clostridium acetobutylicum (strain ATCC 824 / DSM 792 / JCM 1419 / IAM 19013 / LMG 5710 / NBRC 13948 / NRRL B-527 / VKM B-1787 / 2291 / W).